The chain runs to 76 residues: MKLTCMMIVAVLFLTAWTFATADDSSNGLENLFPKAHHEMKNPEASKLNERCLDAGEICDFFFPTCCGYCILLFCA.

The N-terminal stretch at 1-22 (MKLTCMMIVAVLFLTAWTFATA) is a signal peptide. The propeptide occupies 23 to 50 (DDSSNGLENLFPKAHHEMKNPEASKLNE). Cystine bridges form between Cys-52–Cys-67, Cys-59–Cys-70, and Cys-66–Cys-75.

Belongs to the conotoxin O1 superfamily. As to expression, expressed by the venom duct.

It is found in the secreted. In terms of biological role, omega-conotoxins act at presynaptic membranes, they bind and block voltage-gated calcium channels (Cav). The protein is Omega-conotoxin-like TxMKLT1-0141 of Conus textile (Cloth-of-gold cone).